A 117-amino-acid chain; its full sequence is Large ribosomal subunit protein bL20c (117 aa).

It belongs to the bacterial ribosomal protein bL20 family.

The protein localises to the plastid. The protein resides in the chloroplast. In terms of biological role, binds directly to 23S ribosomal RNA and is necessary for the in vitro assembly process of the 50S ribosomal subunit. It is not involved in the protein synthesizing functions of that subunit. This is Large ribosomal subunit protein bL20c from Aethionema grandiflorum (Persian stone-cress).